A 453-amino-acid polypeptide reads, in one-letter code: Phosphoglucosamine mutase (453 aa).

The Phosphoserine intermediate role is filled by S102. Residues S102, D243, D245, and D247 each coordinate Mg(2+). Residue S102 is modified to Phosphoserine.

Belongs to the phosphohexose mutase family. It depends on Mg(2+) as a cofactor. In terms of processing, activated by phosphorylation.

It carries out the reaction alpha-D-glucosamine 1-phosphate = D-glucosamine 6-phosphate. In terms of biological role, catalyzes the conversion of glucosamine-6-phosphate to glucosamine-1-phosphate. In Bartonella tribocorum (strain CIP 105476 / IBS 506), this protein is Phosphoglucosamine mutase.